Here is a 310-residue protein sequence, read N- to C-terminus: NADP-dependent D-sorbitol-6-phosphate dehydrogenase (310 aa).

The active-site Proton donor is the Tyr-48. His-108 is a substrate binding site. 210-272 (TPLGGAAANK…SSKIQRLKEN (63 aa)) is a binding site for NADP(+).

It belongs to the aldo/keto reductase family.

It catalyses the reaction D-sorbitol 6-phosphate + NADP(+) = aldehydo-D-glucose 6-phosphate + NADPH + H(+). Synthesizes sorbitol-6-phosphate, a key intermediate in the synthesis of sorbitol which is a major photosynthetic product in many members of the Rosaceae family. The protein is NADP-dependent D-sorbitol-6-phosphate dehydrogenase (S6PDH) of Malus domestica (Apple).